Consider the following 1416-residue polypeptide: Phospholipid-transporting ATPase VD (1416 aa).

Over 1–97 the chain is Cytoplasmic; that stretch reads MTELLQWARH…PRNLFEQFHR (97 aa). A helical membrane pass occupies residues 98–118; it reads AANLYFLFLVVLNWVPLVEAF. At 119–120 the chain is on the exoplasmic loop side; it reads QK. A helical membrane pass occupies residues 121-141; that stretch reads EITMLPLVVVLTIIAIKDGLE. The Cytoplasmic portion of the chain corresponds to 142 to 321; the sequence is DYRKYKIDKQ…SKLERRANTD (180 aa). Residues 322–342 form a helical membrane-spanning segment; it reads VLWCVLLLIVMCLTGALGHGI. The Exoplasmic loop segment spans residues 343-365; sequence WLSRYENMLFFNIPEPDGRVISP. Residues 366-386 form a helical membrane-spanning segment; it reads VLTGFYVFWTMIILLQVLIPI. Residues 387–1110 lie on the Cytoplasmic side of the membrane; the sequence is SLYVSIEIVK…HWCYTRLSNM (724 aa). The active-site 4-aspartylphosphate intermediate is the Asp438. Residues Asp438, Lys439, and Thr440 each coordinate ATP. Asp438 is a Mg(2+) binding site. Thr440 is a binding site for Mg(2+). The interval 498-544 is disordered; that stretch reads AQGCRTVPSGPLGKPSAQLSGSTSAVGNGEGSGEVPHSRQAAFSSPM. The span at 514–523 shows a compositional bias: polar residues; that stretch reads AQLSGSTSAV. The ATP site is built by Glu729, Phe771, Lys795, Arg838, Thr918, Gly919, and Asp920. The segment at 971 to 990 is disordered; it reads PELASSRKNFPQPSDAQGQG. Positions 976–987 are enriched in polar residues; it reads SRKNFPQPSDAQ. ATP-binding positions include 993–1000, Arg1027, and Lys1033; that span reads GLVITGKT. Asp1053 is a Mg(2+) binding site. The ATP site is built by Asn1056 and Asp1057. Asp1057 contributes to the Mg(2+) binding site. The helical transmembrane segment at 1111 to 1131 threads the bilayer; it reads ILYFFYKNVAYVNLLFWYQFF. The Exoplasmic loop segment spans residues 1132-1142; sequence CGFSGTSMTDY. A helical transmembrane segment spans residues 1143–1163; it reads WVLIFFNLLFTSVPPIIYGVL. Over 1164-1192 the chain is Cytoplasmic; sequence EKDVSAETLLQLPELYRSGQRSEEYLPLT. Residues 1193–1213 form a helical membrane-spanning segment; that stretch reads FWITLLDAFYQSLVCFFVPYF. Residues 1214–1221 lie on the Exoplasmic loop side of the membrane; the sequence is TYQGSDID. The chain crosses the membrane as a helical span at residues 1222–1242; it reads IFTFGNPLNTAALFIILLHLV. Residues 1243-1252 lie on the Cytoplasmic side of the membrane; that stretch reads IESKSLTWIH. A helical membrane pass occupies residues 1253 to 1273; that stretch reads MLVTVGSILSYFFFALAFGAL. At 1274–1289 the chain is on the exoplasmic loop side; the sequence is CVTCNPPSNPYGIMRK. Residues 1290-1310 form a helical membrane-spanning segment; it reads HMLDPVFYLVCVLTTFVALLP. Residues 1311–1416 are Cytoplasmic-facing; sequence RFLYRVLQGS…ASKMTGSSAS (106 aa). A disordered region spans residues 1358 to 1416; that stretch reads SKHASQSAAMSGRPTPGSSAVLAMKSATVSTVEQSTRETALDRGCSEPGASKMTGSSAS. 1361–1368 is an ATP binding site; that stretch reads ASQSAAMS. Residues 1392–1402 are compositionally biased toward basic and acidic residues; sequence STRETALDRGC.

The protein belongs to the cation transport ATPase (P-type) (TC 3.A.3) family. Type IV subfamily. In terms of assembly, component of a P4-ATPase flippase complex which consists of a catalytic alpha subunit ATP10A and an accessory beta subunit TMEM30A. Mg(2+) serves as cofactor. In terms of processing, autophosphorylated at the conserved aspartate of the P-type ATPase signature sequence. In terms of tissue distribution, expressed at low amounts in liver, brain, testes, and kidney (at protein level). Expressed in placenta.

Its subcellular location is the cell membrane. The protein resides in the endoplasmic reticulum membrane. It carries out the reaction ATP + H2O + phospholipidSide 1 = ADP + phosphate + phospholipidSide 2.. The catalysed reaction is a beta-D-glucosyl-(1&lt;-&gt;1')-N-acylsphing-4-enine(out) + ATP + H2O = a beta-D-glucosyl-(1&lt;-&gt;1')-N-acylsphing-4-enine(in) + ADP + phosphate + H(+). In terms of biological role, catalytic component of a P4-ATPase flippase complex, which catalyzes the hydrolysis of ATP coupled to the transport of glucosylceramide (GlcCer) from the outer to the inner leaflet of the plasma membrane. This Mus musculus (Mouse) protein is Phospholipid-transporting ATPase VD (Atp10d).